We begin with the raw amino-acid sequence, 354 residues long: Rhodopsin (354 aa).

Residues 1–36 (MNGTEGPYFNVPMVNTTGIVRSPYEYPQYYLVSPAA) lie on the Extracellular side of the membrane. N-linked (GlcNAc...) asparagine glycosylation is found at Asn2 and Asn15. A helical membrane pass occupies residues 37–61 (YAALGAYMFFLILVGFPINFLTLYV). Topologically, residues 62–73 (TLEHKKLRTPLN) are cytoplasmic. Residues 74 to 96 (YILLNLAVADLFMVFGGFTTTMY) form a helical membrane-spanning segment. Over 97–110 (TSMHGYFVLGRLGC) the chain is Extracellular. A disulfide bond links Cys110 and Cys187. A helical transmembrane segment spans residues 111–133 (NLEGFFATLGGEIGLWSLVVLAI). The short motif at 134–136 (ERW) is the 'Ionic lock' involved in activated form stabilization element. Over 134-152 (ERWVVVCKPISNFRFGENH) the chain is Cytoplasmic. The chain crosses the membrane as a helical span at residues 153–173 (AIMGLVFTWIMAASCAVPPLV). The Extracellular portion of the chain corresponds to 174–202 (GWSRYIPEGMQCSCGVDYYTRAEGFNNES). A helical membrane pass occupies residues 203 to 224 (FVVYMFVCHFLIPLIVVFFCYG). Residues 225 to 252 (RLLCAVKEAAAAQQESETTQRAEREVTR) are Cytoplasmic-facing. The helical transmembrane segment at 253-274 (MVVIMVIGFLVCWLPYASVAWY) threads the bilayer. At 275-286 (IFTNQGSEFGPL) the chain is on the extracellular side. The chain crosses the membrane as a helical span at residues 287–308 (FMTIPAFFAKSSSIYNPAIYIC). The residue at position 296 (Lys296) is an N6-(retinylidene)lysine. The Cytoplasmic portion of the chain corresponds to 309–354 (MNKQFRNCMITTLCCGKNPFEEEEGASTTASKTEASSVSSSSVSPA). 2 S-palmitoyl cysteine lipidation sites follow: Cys322 and Cys323. The segment at 332–354 (EGASTTASKTEASSVSSSSVSPA) is disordered. Positions 334-354 (ASTTASKTEASSVSSSSVSPA) are enriched in low complexity.

Belongs to the G-protein coupled receptor 1 family. Opsin subfamily. Post-translationally, phosphorylated on some or all of the serine and threonine residues present in the C-terminal region. Contains one covalently linked retinal chromophore.

Its subcellular location is the membrane. It localises to the cell projection. The protein resides in the cilium. It is found in the photoreceptor outer segment. In terms of biological role, photoreceptor required for image-forming vision at low light intensity. While most salt water fish species use retinal as chromophore, most freshwater fish use 3-dehydroretinal, or a mixture of retinal and 3-dehydroretinal. Light-induced isomerization of 11-cis to all-trans retinal triggers a conformational change that activates signaling via G-proteins. Subsequent receptor phosphorylation mediates displacement of the bound G-protein alpha subunit by arrestin and terminates signaling. The chain is Rhodopsin (rho) from Oryzias latipes (Japanese rice fish).